The chain runs to 287 residues: Homoserine kinase (287 aa).

An ATP-binding site is contributed by 78–88 (PLSRGLGSSST).

It belongs to the GHMP kinase family. Homoserine kinase subfamily.

It localises to the cytoplasm. It carries out the reaction L-homoserine + ATP = O-phospho-L-homoserine + ADP + H(+). Its pathway is amino-acid biosynthesis; L-threonine biosynthesis; L-threonine from L-aspartate: step 4/5. Functionally, catalyzes the ATP-dependent phosphorylation of L-homoserine to L-homoserine phosphate. This chain is Homoserine kinase, found in Lactobacillus gasseri (strain ATCC 33323 / DSM 20243 / BCRC 14619 / CIP 102991 / JCM 1131 / KCTC 3163 / NCIMB 11718 / NCTC 13722 / AM63).